The primary structure comprises 271 residues: Mannosyl-3-phosphoglycerate phosphatase (271 aa).

The active-site Nucleophile is the Asp13. Mg(2+) contacts are provided by Asp13, Asp15, and Asp214.

It belongs to the HAD-like hydrolase superfamily. MPGP family. It depends on Mg(2+) as a cofactor.

The protein localises to the cytoplasm. It carries out the reaction 2-O-(alpha-D-mannosyl)-3-phosphoglycerate + H2O = (2R)-2-O-(alpha-D-mannosyl)-glycerate + phosphate. The sequence is that of Mannosyl-3-phosphoglycerate phosphatase (yedP) from Shigella boydii serotype 4 (strain Sb227).